Reading from the N-terminus, the 250-residue chain is Ubiquinone/menaquinone biosynthesis C-methyltransferase UbiE (250 aa).

S-adenosyl-L-methionine contacts are provided by residues T73, D94, 122 to 123 (NA), and S139.

It belongs to the class I-like SAM-binding methyltransferase superfamily. MenG/UbiE family.

The catalysed reaction is a 2-demethylmenaquinol + S-adenosyl-L-methionine = a menaquinol + S-adenosyl-L-homocysteine + H(+). The enzyme catalyses a 2-methoxy-6-(all-trans-polyprenyl)benzene-1,4-diol + S-adenosyl-L-methionine = a 5-methoxy-2-methyl-3-(all-trans-polyprenyl)benzene-1,4-diol + S-adenosyl-L-homocysteine + H(+). It functions in the pathway quinol/quinone metabolism; menaquinone biosynthesis; menaquinol from 1,4-dihydroxy-2-naphthoate: step 2/2. It participates in cofactor biosynthesis; ubiquinone biosynthesis. Its function is as follows. Methyltransferase required for the conversion of demethylmenaquinol (DMKH2) to menaquinol (MKH2) and the conversion of 2-polyprenyl-6-methoxy-1,4-benzoquinol (DDMQH2) to 2-polyprenyl-3-methyl-6-methoxy-1,4-benzoquinol (DMQH2). This chain is Ubiquinone/menaquinone biosynthesis C-methyltransferase UbiE, found in Francisella tularensis subsp. tularensis (strain WY96-3418).